The chain runs to 75 residues: UPF0270 protein PP_1747 (75 aa).

It belongs to the UPF0270 family.

The sequence is that of UPF0270 protein PP_1747 from Pseudomonas putida (strain ATCC 47054 / DSM 6125 / CFBP 8728 / NCIMB 11950 / KT2440).